Consider the following 421-residue polypeptide: CinA-like protein (421 aa).

This sequence belongs to the CinA family.

This is CinA-like protein from Mycobacterium sp. (strain MCS).